The primary structure comprises 303 residues: Phytochrome-associated serine/threonine-protein phosphatase 3 (303 aa).

Zn(2+)-binding residues include D50, H52, D78, and N110. Catalysis depends on H111, which acts as the Proton donor. Zn(2+) is bound by residues H160 and H234.

This sequence belongs to the PPP phosphatase family. PP-6 (PP-V) subfamily. In terms of assembly, interacts with PHYA and PHYB, mostly when they are phosphorylated and in Pfr forms. Interacts with TAP46. Interacts with NRP. Interacts with PIN1 and PIN2. Interacts with ABI5. Interacts with PIF3 and PIF4. Protein phosphatase 6 (PP6) holoenzyme is a heterotrimeric complex formed by the catalytic subunit FYPP, a SAPS domain-containing subunit (SAL) and a protein phosphatase 2A regulatory subunit A (PP2AA). It depends on Zn(2+) as a cofactor. In terms of tissue distribution, mostly expressed in flowers. Also detected to a lower extent in stems and leaves. Expressed in roots.

Its subcellular location is the cytoplasm. It catalyses the reaction O-phospho-L-seryl-[protein] + H2O = L-seryl-[protein] + phosphate. The enzyme catalyses O-phospho-L-threonyl-[protein] + H2O = L-threonyl-[protein] + phosphate. In terms of biological role, catalytic subunit of protein phosphatase 6 (PP6). Dephosphorylates phosphorylated phytochromes, with a preference toward Pfr forms. Plays a major role in the photoperiodic control of flowering time in long days by modulating phytochrome signals in flowering time control. Involved in the regulation of polar auxin transport in roots. Dephosphorylates directly the auxin efflux carriers PIN1 and PIN2, thus promoting their proper polar localization in root cell plasma membrane. Acts antagonistically with the protein kinase PID to regulate the reversible phosphorylation of PIN and polar targeting, subsequently impacting polar auxin transport and plant development. Involved in the regulation of abscisic acid (ABA) signaling during seed germination and postgermination seedling growth. Functions as a negative regulator of ABA signaling through direct dephosphorylation and destabilization of ABI5 protein. Acts antagonistically with the protein kinase SRK2E/SNRK2.6 to regulate ABI5 phosphorylation and ABA responses. Involved in the regulation of phosphorylation status in hypocotyl phototropism. Involved in the negative regulation of photomorphogenesis by controlling the stability and transcriptional activity of PIF3 and PIF4 proteins in the dark, via the regulation of their phosphorylation status. The chain is Phytochrome-associated serine/threonine-protein phosphatase 3 from Arabidopsis thaliana (Mouse-ear cress).